Here is a 485-residue protein sequence, read N- to C-terminus: MTITPQNLIALLPLLIVGLTVVVVMLSIAWRRNHFLNATLSVIGLNAALVSLWFVGQAGAMDVTPLMRVDGFAMLYTGLVLLASLATCTFAYPWLEGYNDNKDEFYLLVLIAALGGILLANANHLASLFLGIELISLPLFGLVGYAFRQKRSLEASIKYTILSAAASSFLLFGMALVYAQSGDLSFVALGKKLGDGMLNEPLLLAGFGLMIVGLGFKLSLVPFHLWTPDVYQGAPAPVSTFLATASKIAIFGVVMRLFLYAPVGDSEAIRVVLAIIAFASIIFGNLMALSQTNIKRLLGYSSISHLGYLLVALIALQTGEMSMEAVGVYLVGYLFSSLGAFGVVSLMSSPYRGPDADSLFSYRGLFWHRPILAAVMTVMMLSLAGIPMTLGFIGKFYVLAVGVQAHLWWLVGAVVVGSAIGLYYYLRVAVSLYLHAPEQPGRDAPSNWQYSAGGIVVLISALLVLVLGVWPQPLISIVRLAMPLM.

A run of 14 helical transmembrane segments spans residues 8–28 (LIALLPLLIVGLTVVVVMLSI), 35–55 (FLNATLSVIGLNAALVSLWFV), 71–91 (GFAMLYTGLVLLASLATCTFA), 105–125 (FYLLVLIAALGGILLANANHL), 127–147 (SLFLGIELISLPLFGLVGYAF), 159–179 (YTILSAAASSFLLFGMALVYA), 203–223 (LLAGFGLMIVGLGFKLSLVPF), 235–255 (PAPVSTFLATASKIAIFGVVM), 271–291 (VVLAIIAFASIIFGNLMALSQ), 297–317 (LLGYSSISHLGYLLVALIALQ), 326–346 (VGVYLVGYLFSSLGAFGVVSL), 373–393 (AAVMTVMMLSLAGIPMTLGFI), 408–430 (WWLVGAVVVGSAIGLYYYLRVAV), and 455–475 (IVVLISALLVLVLGVWPQPLI).

It belongs to the complex I subunit 2 family. NDH-1 is composed of 13 different subunits. Subunits NuoA, H, J, K, L, M, N constitute the membrane sector of the complex.

The protein localises to the cell inner membrane. It carries out the reaction a quinone + NADH + 5 H(+)(in) = a quinol + NAD(+) + 4 H(+)(out). NDH-1 shuttles electrons from NADH, via FMN and iron-sulfur (Fe-S) centers, to quinones in the respiratory chain. The immediate electron acceptor for the enzyme in this species is believed to be ubiquinone. Couples the redox reaction to proton translocation (for every two electrons transferred, four hydrogen ions are translocated across the cytoplasmic membrane), and thus conserves the redox energy in a proton gradient. The polypeptide is NADH-quinone oxidoreductase subunit N (Escherichia coli O81 (strain ED1a)).